We begin with the raw amino-acid sequence, 545 residues long: MKCSTFCFWYVCKIIFFFLSFNIQISIANPQENFLKCLSQYIPTNVTNAKLVYTQHDQFYMSILNSTVQNLRFTSDTTPKPLVITTPLNVSHIQGTILCSKKVGLQIRTRSGGHDAEGMSYISQVPFVIVDLRNMHSVKIDVHSQTAWVESGATLGEVYYWINENNENLSFPAGYCPTVGTGGHFSGGGYGALMRNYGLAADNIIDAHLVNVDGKVLDRKSMGEDLFWAIRGGGGENFGIIAAWKIRLVAVPSMSTIFSVKKNMEIHELVKLVNKWQNIAYMYEKELLLFTHFITRNITDNQGKNKTTIHSYFSSIFHGGVDSLVDLMNKSFPELGIKKTDCKQLSWIDTIIFYSGVVNYNTTNFKKEILLDRSGGRKAAFSIKLDYVKKPIPETAMVTILEKLYEEDVGVGMFVFYPYGGIMDEISESAIPFPHRAGITYEIWYIASWEKQEDNEKHINWIRNVYNFTTPYVSQNPRMAYLNYRDLDLGKTNFESPNNYTQARIWGEKYFGKNFNRLVKVKTKVDPDNFFRNEQSIPPLPLRHH.

Residues 1-28 (MKCSTFCFWYVCKIIFFFLSFNIQISIA) form the signal peptide. Cys37 and Cys99 are disulfide-bonded. N-linked (GlcNAc...) asparagine glycans are attached at residues Asn45, Asn65, Asn89, and Asn168. The 175-residue stretch at 77-251 (TTPKPLVITT…AAWKIRLVAV (175 aa)) folds into the FAD-binding PCMH-type domain. The 6-(S-cysteinyl)-8alpha-(pros-histidyl)-FAD (His-Cys) cross-link spans 114–176 (HDAEGMSYIS…ENLSFPAGYC (63 aa)). His292 is a substrate binding site. N-linked (GlcNAc...) asparagine glycosylation is found at Asn297, Asn305, Asn329, and Asn361. Tyr417 is a substrate binding site. Asn467 is a glycosylation site (N-linked (GlcNAc...) asparagine). Tyr484 functions as the Proton acceptor in the catalytic mechanism. A glycan (N-linked (GlcNAc...) asparagine) is linked at Asn499.

It belongs to the oxygen-dependent FAD-linked oxidoreductase family. It depends on FAD as a cofactor. The FAD cofactor is bound via a bicovalent 6-S-cysteinyl, 8alpha-N1-histidyl FAD linkage.

The protein resides in the secreted. Functionally, has no cannabidiolic acid synthase activity. The protein is Cannabidiolic acid synthase-like 2 (CBDAS3) of Cannabis sativa (Hemp).